Here is a 284-residue protein sequence, read N- to C-terminus: Co-chaperone protein DjlA (284 aa).

At 1–6 (MHIFGK) the chain is on the periplasmic side. A helical membrane pass occupies residues 7 to 30 (ILGAFFGFLFGGPFGAIFGIFLGH). The Cytoplasmic portion of the chain corresponds to 31 to 284 (QFDKARRLNQ…ELIRKEKGIK (254 aa)). The interval 190–211 (QGGGFGGSQQQSHSGQQWQQPS) is disordered. The segment covering 197–211 (SQQQSHSGQQWQQPS) has biased composition (low complexity). The J domain maps to 218-284 (DAYEVLGVSE…ELIRKEKGIK (67 aa)).

As to quaternary structure, homodimer.

The protein resides in the cell inner membrane. Functionally, regulatory DnaK co-chaperone. Direct interaction between DnaK and DjlA is needed for the induction of the wcaABCDE operon, involved in the synthesis of a colanic acid polysaccharide capsule, possibly through activation of the RcsB/RcsC phosphotransfer signaling pathway. The colanic acid capsule may help the bacterium survive conditions outside the host. The polypeptide is Co-chaperone protein DjlA (Vibrio cholerae serotype O1 (strain ATCC 39315 / El Tor Inaba N16961)).